The sequence spans 364 residues: tRNA N6-adenosine threonylcarbamoyltransferase (364 aa).

Residues H115 and H119 each contribute to the Fe cation site. Residues 137–141 (LVSGG), D170, G183, and N288 contribute to the substrate site. D316 is a binding site for Fe cation.

This sequence belongs to the KAE1 / TsaD family. It depends on Fe(2+) as a cofactor.

It is found in the cytoplasm. It carries out the reaction L-threonylcarbamoyladenylate + adenosine(37) in tRNA = N(6)-L-threonylcarbamoyladenosine(37) in tRNA + AMP + H(+). Functionally, required for the formation of a threonylcarbamoyl group on adenosine at position 37 (t(6)A37) in tRNAs that read codons beginning with adenine. Is involved in the transfer of the threonylcarbamoyl moiety of threonylcarbamoyl-AMP (TC-AMP) to the N6 group of A37, together with TsaE and TsaB. TsaD likely plays a direct catalytic role in this reaction. The protein is tRNA N6-adenosine threonylcarbamoyltransferase of Bartonella bacilliformis (strain ATCC 35685 / KC583 / Herrer 020/F12,63).